The chain runs to 294 residues: Small ribosomal subunit protein uS2 (294 aa).

The tract at residues 254–294 (ESSNTEAPVAETAAAEAPVADAAIEAPVAEEAKTTEADDTK) is disordered. Residues 259–282 (EAPVAETAAAEAPVADAAIEAPVA) are compositionally biased toward low complexity. The span at 283 to 294 (EEAKTTEADDTK) shows a compositional bias: basic and acidic residues.

Belongs to the universal ribosomal protein uS2 family.

The protein is Small ribosomal subunit protein uS2 of Renibacterium salmoninarum (strain ATCC 33209 / DSM 20767 / JCM 11484 / NBRC 15589 / NCIMB 2235).